The following is a 449-amino-acid chain: MYLVAGLGLTGQSVLNYFASQGEPCYALDTRPEFDTSELEKAYPDVAFATGTLPTQWCGKIDSIVLSPGIAKSEPWVKHCINQGTEVIGDIELFARAAGKPIVAITGSNGKSTVTTLVAEALKEAGYAVGVGGNIGCPALDLLTHPTEFDVYVLELSSFQLETTYSLQTIAATVLNISEDHMDRYLALEDYIQAKMTILNNTELAVLPLDFERVGIARPGDEVRFGLNYAEALPPKEYGIVMKNGQAWLGWEDHASVPVTAMAQQGLHHQLNALAMMALCRPFDLSDAVFEKVLKTFKGLPHRTQVVLEQEGVRWINDSKGTNVGATVTAIESIKETLDGQVILIAGGVGKEADFNELGQAVVQSCRQAILFGQDKAIIAQQLPQEKIQLVDTLSEAVLLAKTIAKSGDAVLFSPACASFDQFKNYIERGNAFEAFVQQFIANEVGGKS.

107–113 is an ATP binding site; that stretch reads GSNGKST.

The protein belongs to the MurCDEF family.

The protein localises to the cytoplasm. The catalysed reaction is UDP-N-acetyl-alpha-D-muramoyl-L-alanine + D-glutamate + ATP = UDP-N-acetyl-alpha-D-muramoyl-L-alanyl-D-glutamate + ADP + phosphate + H(+). It participates in cell wall biogenesis; peptidoglycan biosynthesis. Its function is as follows. Cell wall formation. Catalyzes the addition of glutamate to the nucleotide precursor UDP-N-acetylmuramoyl-L-alanine (UMA). This chain is UDP-N-acetylmuramoylalanine--D-glutamate ligase, found in Hydrogenovibrio crunogenus (strain DSM 25203 / XCL-2) (Thiomicrospira crunogena).